A 161-amino-acid polypeptide reads, in one-letter code: Cyclic pyranopterin monophosphate synthase (161 aa).

Substrate contacts are provided by residues 75-77 and 115-116; these read MCH and ME. D130 is an active-site residue.

The protein belongs to the MoaC family. Homohexamer; trimer of dimers.

The catalysed reaction is (8S)-3',8-cyclo-7,8-dihydroguanosine 5'-triphosphate = cyclic pyranopterin phosphate + diphosphate. It participates in cofactor biosynthesis; molybdopterin biosynthesis. Its function is as follows. Catalyzes the conversion of (8S)-3',8-cyclo-7,8-dihydroguanosine 5'-triphosphate to cyclic pyranopterin monophosphate (cPMP). The sequence is that of Cyclic pyranopterin monophosphate synthase from Bacillus mycoides (strain KBAB4) (Bacillus weihenstephanensis).